The chain runs to 1180 residues: RecBCD enzyme subunit RecB (1180 aa).

In terms of domain architecture, UvrD-like helicase ATP-binding spans 2–450 (SDVAETLDPL…YTLDTNWRSA (449 aa)). The segment at 2 to 853 (SDVAETLDPL…KGEPQDAAGL (852 aa)) is ATPase, DNA-binding and helicase activity, interacts with RecC. Residue 23–30 (ASAGTGKT) participates in ATP binding. Residues 252–254 (IDR) mediate DNA binding. An ATP-binding site is contributed by Trp-447. One can recognise a UvrD-like helicase C-terminal domain in the interval 480–746 (SAGKNQALRF…QIVTIHKSKG (267 aa)). 3 consecutive DNA-binding regions follow at residues 511 to 512 (VG), 560 to 561 (SR), and Arg-761. Residues 900-1180 (NWRVTSYSGL…MFAGMTLEEA (281 aa)) are nuclease activity, interacts with RecD and RecA. Mg(2+)-binding residues include His-956, Asp-1067, Asp-1080, and Tyr-1081. The active-site For nuclease activity is the Asp-1080.

It belongs to the helicase family. UvrD subfamily. In terms of assembly, heterotrimer of RecB, RecC and RecD. All subunits contribute to DNA-binding. The C-terminus interacts with RecA. Interacts with YgbT (Cas1). (Microbial infection) Lambda virus GamS protein interacts with the enzyme without displacing any of the subunits. Requires Mg(2+) as cofactor.

The enzyme catalyses Exonucleolytic cleavage (in the presence of ATP) in either 5'- to 3'- or 3'- to 5'-direction to yield 5'-phosphooligonucleotides.. It catalyses the reaction Couples ATP hydrolysis with the unwinding of duplex DNA by translocating in the 3'-5' direction.. The catalysed reaction is ATP + H2O = ADP + phosphate + H(+). With respect to regulation, after reacting with DNA bearing a Chi site the holoenzyme is disassembled and loses exonuclease activity, DNA unwinding and Chi-directed DNA cleavage; RecB remains complexed with ssDNA, which may prevent holoenzyme reassembly. High levels of Mg(2+) (13 mM MgCl(2+)) or incubation with DNase allows holoenzyme reassembly, suggesting it is DNA bound to RecB that prevents reassembly. (Microbial infection) RecBCD is inhibited by the lambda virus gam protein (both GamL and GamS isoforms); in vitro a short preincubation prior to adding DNA results in maximal inhibition. Its function is as follows. A helicase/nuclease that prepares dsDNA breaks (DSB) for recombinational DNA repair. Binds to DSBs and unwinds DNA via a rapid (&gt;1 kb/second) and highly processive (&gt;30 kb) ATP-dependent bidirectional helicase. Unwinds dsDNA until it encounters a Chi (crossover hotspot instigator, 5'-GCTGGTGG-3') sequence from the 3' direction. Cuts ssDNA a few nucleotides 3' to Chi site, by nicking one strand or switching the strand degraded (depending on the reaction conditions). The properties and activities of the enzyme are changed at Chi. The Chi-altered holoenzyme produces a long 3'-ssDNA overhang which facilitates RecA-binding to the ssDNA for homologous DNA recombination and repair. Holoenzyme degrades any linearized DNA that is unable to undergo homologous recombination. In the holoenzyme this subunit contributes ATPase, 3'-5' helicase, exonuclease activity and loads RecA onto ssDNA. The RecBC complex requires the RecD subunit for nuclease activity, but can translocate along ssDNA in both directions. The RecBCD complex does not unwind G-quadruplex DNA. Probably interacts with a component of retron Ec48 which moniters RecBCD stability; when RecB is missing or impaired the retron is activated and becomes toxic. This Escherichia coli (strain K12) protein is RecBCD enzyme subunit RecB.